A 627-amino-acid polypeptide reads, in one-letter code: Phosphomethylpyrimidine synthase (627 aa).

Residues 1–21 (MSVQSNKNLSESAQVDQQSIQ) are disordered. Residues asparagine 231, methionine 260, tyrosine 289, histidine 325, 345–347 (SRG), 386–389 (DGLR), and glutamate 425 contribute to the substrate site. Histidine 429 contacts Zn(2+). Tyrosine 452 is a substrate binding site. Histidine 493 serves as a coordination point for Zn(2+). 3 residues coordinate [4Fe-4S] cluster: cysteine 573, cysteine 576, and cysteine 581.

Belongs to the ThiC family. In terms of assembly, homodimer. Requires [4Fe-4S] cluster as cofactor.

The catalysed reaction is 5-amino-1-(5-phospho-beta-D-ribosyl)imidazole + S-adenosyl-L-methionine = 4-amino-2-methyl-5-(phosphooxymethyl)pyrimidine + CO + 5'-deoxyadenosine + formate + L-methionine + 3 H(+). It participates in cofactor biosynthesis; thiamine diphosphate biosynthesis. Functionally, catalyzes the synthesis of the hydroxymethylpyrimidine phosphate (HMP-P) moiety of thiamine from aminoimidazole ribotide (AIR) in a radical S-adenosyl-L-methionine (SAM)-dependent reaction. The sequence is that of Phosphomethylpyrimidine synthase from Stutzerimonas stutzeri (strain A1501) (Pseudomonas stutzeri).